The following is a 201-amino-acid chain: Glycerol-3-phosphate acyltransferase (201 aa).

Helical transmembrane passes span 4–24, 84–104, 116–136, and 157–177; these read IASLVLAYLLGSVPFAVLVSL, EIAMVGLAVFIGHLWPVFLAF, VLLAVNPWLALIAAAVWLAVA, and AWFIEPGVYAGLTIVIALLLV.

Belongs to the PlsY family. Probably interacts with PlsX.

Its subcellular location is the cell inner membrane. The enzyme catalyses an acyl phosphate + sn-glycerol 3-phosphate = a 1-acyl-sn-glycero-3-phosphate + phosphate. It functions in the pathway lipid metabolism; phospholipid metabolism. Catalyzes the transfer of an acyl group from acyl-phosphate (acyl-PO(4)) to glycerol-3-phosphate (G3P) to form lysophosphatidic acid (LPA). This enzyme utilizes acyl-phosphate as fatty acyl donor, but not acyl-CoA or acyl-ACP. The chain is Glycerol-3-phosphate acyltransferase from Laribacter hongkongensis (strain HLHK9).